The primary structure comprises 89 residues: Small ribosomal subunit protein uS15 (89 aa).

The disordered stretch occupies residues 1 to 23 (MTLNTEAKQKIINKHQTHGTDTG).

The protein belongs to the universal ribosomal protein uS15 family. Part of the 30S ribosomal subunit. Forms a bridge to the 50S subunit in the 70S ribosome, contacting the 23S rRNA.

One of the primary rRNA binding proteins, it binds directly to 16S rRNA where it helps nucleate assembly of the platform of the 30S subunit by binding and bridging several RNA helices of the 16S rRNA. Its function is as follows. Forms an intersubunit bridge (bridge B4) with the 23S rRNA of the 50S subunit in the ribosome. This Prochlorococcus marinus (strain SARG / CCMP1375 / SS120) protein is Small ribosomal subunit protein uS15.